The primary structure comprises 105 residues: Large ribosomal subunit protein uL24 (105 aa).

It belongs to the universal ribosomal protein uL24 family. Part of the 50S ribosomal subunit.

Functionally, one of two assembly initiator proteins, it binds directly to the 5'-end of the 23S rRNA, where it nucleates assembly of the 50S subunit. In terms of biological role, one of the proteins that surrounds the polypeptide exit tunnel on the outside of the subunit. This is Large ribosomal subunit protein uL24 from Marinomonas sp. (strain MWYL1).